A 219-amino-acid polypeptide reads, in one-letter code: MAEINRMQYEIDYTEGISQRMRVPEMLKVAPGNLGANLKAQQDMPIPGVVMEVPERIVVAGQSEESPFSRPSDLDFISGTNIGTLALKTPPRVLTLSERPLDFLDLEGLTPATPQSEEIRSSGHLKRDKFSSENALRQNGQLVRHDSMSAMSTLDTTLDATADDLALADAASLRRQIIKLNRRLLLLEEENKERVKHEMTMYSIIIIFGLLNSWLWLRR.

Residues 1–199 are Cytoplasmic-facing; it reads MAEINRMQYE…ENKERVKHEM (199 aa). Positions 164 to 194 form a coiled coil; the sequence is DLALADAASLRRQIIKLNRRLLLLEEENKER. A helical; Anchor for type IV membrane protein transmembrane segment spans residues 200–217; sequence TMYSIIIIFGLLNSWLWL. Over 218 to 219 the chain is Extracellular; the sequence is RR.

This sequence belongs to the Tango11 family.

It is found in the mitochondrion outer membrane. The protein localises to the peroxisome. It localises to the cytoplasmic vesicle. The protein resides in the secretory vesicle. Its subcellular location is the synaptic vesicle. In terms of biological role, plays a role in mitochondrial and peroxisomal fission. Promotes the recruitment and association of the fission mediator dynamin-related protein 1 (DNM1L) to the mitochondrial surface. The polypeptide is Mitochondrial fission factor homolog A (mff-a) (Xenopus laevis (African clawed frog)).